The following is a 390-amino-acid chain: Chitinase-3-like protein 2 (390 aa).

The signal sequence occupies residues 1-26 (MGATTMDQKSLWAGVVVLLLLQGGSA). One can recognise a GH18 domain in the interval 27 to 390 (YKLVCYFTNW…QAVKRSLGSL (364 aa)). The cysteines at positions 31 and 56 are disulfide-linked. A glycan (N-linked (GlcNAc...) asparagine) is linked at Asn-35. Residues 75–76 (DK), 102–105 (GGYL), Tyr-104, Tyr-146, 210–213 (LSFD), Asp-213, and Trp-360 contribute to the chitin site.

This sequence belongs to the glycosyl hydrolase 18 family. Highest expression in chondrocytes, followed by synoviocytes, lung and heart. Not detected in spleen, pancreas, and liver. May also be expressed in developing brain and placenta.

The protein resides in the secreted. Lectin that binds chitooligosaccharides and other glycans with high affinity, but not heparin. Has no chitinase activity. In Homo sapiens (Human), this protein is Chitinase-3-like protein 2 (CHI3L2).